A 457-amino-acid polypeptide reads, in one-letter code: Angiopoietin-related protein 6 (457 aa).

The first 24 residues, 1-24 (MGTARLRKLQLLLLLGAWRALGGA), serve as a signal peptide directing secretion. 2 coiled-coil regions span residues 51–77 (DSELATLRMRLGRHEELLRALQRRAAE) and 126–164 (LLAERALDAEAEARRTTARLQQLDAQLREHAQLMSQHSS). The segment at 201-235 (SNTSRRLDQTPEHQREQSLRQQGPPSSLLPTGHLA) is disordered. N-linked (GlcNAc...) asparagine glycosylation is present at asparagine 202. Residues 205 to 218 (RRLDQTPEHQREQS) show a composition bias toward basic and acidic residues. A compositionally biased stretch (polar residues) spans 219–229 (LRQQGPPSSLL). Residues 238–456 (TRPVGPWRDC…KAVMLTRLVR (219 aa)) enclose the Fibrinogen C-terminal domain. Cystine bridges form between cysteine 247–cysteine 274 and cysteine 397–cysteine 410.

Highly expressed in the liver, specifically in hepatocytes, and weakly in the heart. Expressed in hematopoietic cells, platelets and mast cells, and detected at wounded skin.

The protein resides in the secreted. May play a role in the wound healing process. May promote epidermal proliferation, remodeling and regeneration. May promote the chemotactic activity of endothelial cells and induce neovascularization. May counteract high-fat diet-induced obesity and related insulin resistance through increased energy expenditure. This chain is Angiopoietin-related protein 6 (Angptl6), found in Mus musculus (Mouse).